A 288-amino-acid chain; its full sequence is Homoserine kinase (288 aa).

Pro79–Ala89 is an ATP binding site.

It belongs to the GHMP kinase family. Homoserine kinase subfamily.

Its subcellular location is the cytoplasm. It catalyses the reaction L-homoserine + ATP = O-phospho-L-homoserine + ADP + H(+). It functions in the pathway amino-acid biosynthesis; L-threonine biosynthesis; L-threonine from L-aspartate: step 4/5. Catalyzes the ATP-dependent phosphorylation of L-homoserine to L-homoserine phosphate. This Listeria monocytogenes serotype 4b (strain CLIP80459) protein is Homoserine kinase.